Here is a 396-residue protein sequence, read N- to C-terminus: Elongation factor Tu 1 (396 aa).

Positions 10–206 (KPHCNIGTIG…TVDDYIPQPD (197 aa)) constitute a tr-type G domain. Residues 19–26 (GHVDHGKT) are G1. 19-26 (GHVDHGKT) contacts GTP. Mg(2+) is bound at residue Thr26. Residues 60–64 (GITIN) are G2. Residues 81–84 (DCPG) form a G3 region. GTP-binding positions include 81–85 (DCPGH) and 136–139 (NKVD). Residues 136-139 (NKVD) form a G4 region. A G5 region spans residues 174-176 (SAK).

It belongs to the TRAFAC class translation factor GTPase superfamily. Classic translation factor GTPase family. EF-Tu/EF-1A subfamily. As to quaternary structure, monomer.

The protein localises to the cytoplasm. The catalysed reaction is GTP + H2O = GDP + phosphate + H(+). GTP hydrolase that promotes the GTP-dependent binding of aminoacyl-tRNA to the A-site of ribosomes during protein biosynthesis. The sequence is that of Elongation factor Tu 1 from Caulobacter sp. (strain K31).